Here is a 200-residue protein sequence, read N- to C-terminus: Glycerol-3-phosphate acyltransferase (200 aa).

Transmembrane regions (helical) follow at residues 9–29 (IIIG…AYFW), 54–74 (VPGM…VLLA), 81–101 (DIAV…PLWL), 112–132 (GAGA…LVWL), 140–160 (YVSL…ALLN), and 165–185 (YLIF…SNIG).

Belongs to the PlsY family. Probably interacts with PlsX.

Its subcellular location is the cell membrane. It carries out the reaction an acyl phosphate + sn-glycerol 3-phosphate = a 1-acyl-sn-glycero-3-phosphate + phosphate. It participates in lipid metabolism; phospholipid metabolism. Catalyzes the transfer of an acyl group from acyl-phosphate (acyl-PO(4)) to glycerol-3-phosphate (G3P) to form lysophosphatidic acid (LPA). This enzyme utilizes acyl-phosphate as fatty acyl donor, but not acyl-CoA or acyl-ACP. This is Glycerol-3-phosphate acyltransferase from Desulforamulus reducens (strain ATCC BAA-1160 / DSM 100696 / MI-1) (Desulfotomaculum reducens).